The chain runs to 639 residues: Serine/threonine-protein phosphatase 2B catalytic subunit A1 (639 aa).

Aspartate 120, histidine 122, and aspartate 148 together coordinate Fe cation. Zn(2+) contacts are provided by aspartate 148 and asparagine 180. Histidine 181 functions as the Proton donor in the catalytic mechanism. Zn(2+) contacts are provided by histidine 229 and histidine 311. Residues 494-503 are compositionally biased toward basic and acidic residues; the sequence is KSDIENERLP. Positions 494 to 602 are disordered; that stretch reads KSDIENERLP…PSTRRRSLEN (109 aa). Composition is skewed to low complexity over residues 515 to 527 and 546 to 572; these read ASPS…PATP and TPIS…GGPP.

This sequence belongs to the PPP phosphatase family. PP-2B subfamily. In terms of assembly, composed of two components (A and B), the A component is the catalytic subunit and the B component confers calcium sensitivity. It depends on Fe(3+) as a cofactor. Requires Zn(2+) as cofactor.

The catalysed reaction is O-phospho-L-seryl-[protein] + H2O = L-seryl-[protein] + phosphate. It catalyses the reaction O-phospho-L-threonyl-[protein] + H2O = L-threonyl-[protein] + phosphate. Functionally, calcium-dependent, calmodulin-stimulated protein phosphatase. This subunit may have a role in the calmodulin activation of calcineurin. The sequence is that of Serine/threonine-protein phosphatase 2B catalytic subunit A1 (CNA1) from Cryptococcus neoformans var. grubii serotype A (strain H99 / ATCC 208821 / CBS 10515 / FGSC 9487) (Filobasidiella neoformans var. grubii).